The chain runs to 601 residues: MEHGSSRGFIWLILFLDFVSRVTGKTQVDALIALRSSLSSGDHTNNILQSWNATHVTPCSWFHVTCNTENSVTRLDLGSANLSGELVPQLAQLPNLQYLELFNNNITGEIPEELGDLMELVSLDLFANNISGPIPSSLGKLGKLRFLRLYNNSLSGEIPRSLTALPLDVLDISNNRLSGDIPVNGSFSQFTSMSFANNKLRPRPASPSPSPSGTSAAIVVGVAAGAALLFALAWWLRRKLQGHFLDVPAEEDPEVYLGQFKRFSLRELLVATEKFSKRNVLGKGRFGILYKGRLADDTLVAVKRLNEERTKGGELQFQTEVEMISMAVHRNLLRLRGFCMTPTERLLVYPYMANGSVASCLRERPEGNPALDWPKRKHIALGSARGLAYLHDHCDQKIIHLDVKAANILLDEEFEAVVGDFGLAKLMNYNDSHVTTAVRGTIGHIAPEYLSTGKSSEKTDVFGYGVMLLELITGQKAFDLARLANDDDIMLLDWVKEVLKEKKLESLVDAELEGKYVETEVEQLIQMALLCTQSSAMERPKMSEVVRMLEGDGLAERWEEWQKEEMPIHDFNYQAYPHAGTDWLIPYSNSLIENDYPSGPR.

Residues 1–24 (MEHGSSRGFIWLILFLDFVSRVTG) form the signal peptide. Residues 25–215 (KTQVDALIAL…SPSPSPSGTS (191 aa)) lie on the Extracellular side of the membrane. 6 N-linked (GlcNAc...) asparagine glycosylation sites follow: N52, N81, N105, N129, N151, and N184. 5 LRR repeats span residues 71–94 (SVTRLDLGSANLSGELVPQLAQLP), 95–118 (NLQYLELFNNNITGEIPEELGDLM), 119–141 (ELVSLDLFANNISGPIPSSLGKL), 143–165 (KLRFLRLYNNSLSGEIPRSLTAL), and 166–188 (PLDVLDISNNRLSGDIPVNGSFS). Residues 216–236 (AAIVVGVAAGAALLFALAWWL) traverse the membrane as a helical segment. Over 237–601 (RRKLQGHFLD…IENDYPSGPR (365 aa)) the chain is Cytoplasmic. The residue at position 272 (T272) is a Phosphothreonine. In terms of domain architecture, Protein kinase spans 275-572 (FSKRNVLGKG…KEEMPIHDFN (298 aa)). Residue 281–289 (LGKGRFGIL) coordinates ATP. T298 carries the phosphothreonine modification. An ATP-binding site is contributed by K303. Residues S356 and S359 each carry the phosphoserine modification. The active-site Proton acceptor is D402. A phosphothreonine mark is found at T435, T436, and T441. Y449 carries the phosphotyrosine modification. S451 carries the post-translational modification Phosphoserine. T452 is subject to Phosphothreonine. Phosphoserine occurs at positions 456 and 506. T532 is modified (phosphothreonine).

This sequence belongs to the protein kinase superfamily. Ser/Thr protein kinase family. In terms of assembly, interacts with TMK4/BARK1. Post-translationally, autophosphorylated.

It is found in the cell membrane. The enzyme catalyses L-seryl-[protein] + ATP = O-phospho-L-seryl-[protein] + ADP + H(+). The catalysed reaction is L-threonyl-[protein] + ATP = O-phospho-L-threonyl-[protein] + ADP + H(+). Serine/threonine-kinase of unknown function. This chain is Somatic embryogenesis receptor kinase 5 (SERK5), found in Arabidopsis thaliana (Mouse-ear cress).